We begin with the raw amino-acid sequence, 307 residues long: Olfactory receptor 13G1 (307 aa).

Residues 1-22 are Extracellular-facing; that stretch reads MNHSVVTEFIILGLTKKPELQG. Asparagine 2 carries an N-linked (GlcNAc...) asparagine glycan. The helical transmembrane segment at 23-43 threads the bilayer; sequence IIFLFFLIVYLVAFLGNMLII. The Cytoplasmic portion of the chain corresponds to 44–51; it reads IAKIYNNT. Residues 52 to 72 form a helical membrane-spanning segment; the sequence is LHTPMYVFLLTLAVVDIICTT. The Extracellular portion of the chain corresponds to 73 to 96; the sequence is SIIPKMLGTMLTSENTISYAGCMS. Cysteine 94 and cysteine 186 are oxidised to a cystine. Residues 97–117 traverse the membrane as a helical segment; that stretch reads QLFLFTWSLGAEMVLFTTMAY. Residues 118-136 lie on the Cytoplasmic side of the membrane; sequence DRYVAICFPLHYSTIMNHH. The helical transmembrane segment at 137 to 157 threads the bilayer; it reads MCVALLSMVMAIAVTNSWVHT. The Extracellular portion of the chain corresponds to 158-194; sequence ALIMRLTFCGPNTIDHFFCEIPPLLALSCSPVRINEV. A helical membrane pass occupies residues 195 to 214; it reads MVYVADITLAIGDFILTCIS. Residues 215–234 are Cytoplasmic-facing; sequence YGFIIVAILRIRTVEGKRKA. Residues 235-255 form a helical membrane-spanning segment; it reads FSTCSSHLTVVTLYYSPVIYT. Topologically, residues 256–268 are extracellular; sequence YIRPASSYTFERD. The helical transmembrane segment at 269-289 threads the bilayer; it reads KVVAALYTLVTPTLNPMVYSF. The Cytoplasmic portion of the chain corresponds to 290-307; that stretch reads QNREMQAGIRKVFAFLKH.

It belongs to the G-protein coupled receptor 1 family.

Its subcellular location is the cell membrane. Functionally, odorant receptor. This Homo sapiens (Human) protein is Olfactory receptor 13G1 (OR13G1).